The primary structure comprises 239 residues: Ribonuclease HII (239 aa).

Residues 30-221 form the RNase H type-2 domain; that stretch reads GPVAGVDEVG…VRRVATRSNG (192 aa). A divalent metal cation-binding residues include D36, E37, and D130. The segment at 217-239 is disordered; sequence TRSNGAATAEREADPPQERDGTG. Over residues 225-239 the composition is skewed to basic and acidic residues; it reads AEREADPPQERDGTG.

Belongs to the RNase HII family. Mn(2+) serves as cofactor. It depends on Mg(2+) as a cofactor.

The protein resides in the cytoplasm. The catalysed reaction is Endonucleolytic cleavage to 5'-phosphomonoester.. Endonuclease that specifically degrades the RNA of RNA-DNA hybrids. The protein is Ribonuclease HII of Mycobacterium ulcerans (strain Agy99).